The following is a 476-amino-acid chain: Protein DETOXIFICATION 3 (476 aa).

The next 12 helical transmembrane spans lie at 35–55 (AAPMAAVTIAQYLLPVISVMV), 66–86 (GVALATSFTNVSGFSILFGLA), 117–137 (IPICVLISVLWIYIEKLLISL), 146–166 (VAGSYALWLIPALFAHAFFIP), 185–205 (LTTLLFHIPVCWAFVYAFGLG), 208–228 (GAAMAISVSFWFYVVILSCYV), 260–280 (AAMVCLEWWLFELLILCSGLL), 289–309 (VLSICLTTASLHYVIPGGVAA), 331–351 (VLAGLCLWLVESAFFSTLLFT), 370–390 (VANLTPLLCLSFILDGFTAVL), 402–422 (IGALNNVVAYYLVGAPVGVYL), and 433–453 (LWCGVVVGSAVQAIILAFVTA).

This sequence belongs to the multi antimicrobial extrusion (MATE) (TC 2.A.66.1) family.

Its subcellular location is the membrane. The protein is Protein DETOXIFICATION 3 of Arabidopsis thaliana (Mouse-ear cress).